A 137-amino-acid chain; its full sequence is Peptide methionine sulfoxide reductase MsrB (137 aa).

Residues 7 to 129 (AEELKKNLSE…NSASLRFTDG (123 aa)) form the MsrB domain. Residues cysteine 46, cysteine 49, cysteine 95, and cysteine 98 each coordinate Zn(2+). Residue cysteine 118 is the Nucleophile of the active site.

Belongs to the MsrB Met sulfoxide reductase family. It depends on Zn(2+) as a cofactor.

The enzyme catalyses L-methionyl-[protein] + [thioredoxin]-disulfide + H2O = L-methionyl-(R)-S-oxide-[protein] + [thioredoxin]-dithiol. The sequence is that of Peptide methionine sulfoxide reductase MsrB from Escherichia coli O8 (strain IAI1).